A 401-amino-acid chain; its full sequence is Carboxybiotin decarboxylase (401 aa).

10 helical membrane-spanning segments follow: residues 20–40 (VISITRIALIIFGFFLSYFGF), 46–66 (PLIMVPMGLGMIAINAGVLFL), 70–90 (VVGTIHLDPLVSEPSVLVNLM), 107–127 (LIACIVFFGIGAMSDISFILI), 131–151 (ASIIVALFAEMGTFATLIIGI), 173–193 (MVLFASLILAKDLFVPIAIIA), 244–264 (LCLLLPVASPLILSFFLGIAI), 275–295 (LLETTLTYGSTLFLGLLLGAL), 306–326 (ISLIVVLGITALLISGIGGVL), and 380–400 (VCGLIVSAIATGVFISTLFLL).

It localises to the cell membrane. The enzyme catalyses N(6)-carboxybiotinyl-L-lysyl-[protein] + n Na(+)(in) + H(+) = N(6)-biotinyl-L-lysyl-[protein] + n Na(+)(out) + CO2. Beta subunit of the biotin-dependent malonate decarboxylase multienzyme complex (EC 7.2.4.4). Acts as an integral membrane-bound carboxybiotin protein decarboxylase by releasing the carboxyl group of the carboxylated biotin carrier MADF. The free energy of the decarboxylation reaction is used to pump Na(+) out of the cell. The sequence is that of Carboxybiotin decarboxylase (madB) from Malonomonas rubra.